We begin with the raw amino-acid sequence, 69 residues long: UPF0337 protein DIP1660 (69 aa).

Composition is skewed to basic and acidic residues over residues 1 to 19 (MSDF…KEAV) and 30 to 41 (DEGRADQTKADV). The disordered stretch occupies residues 1 to 42 (MSDFENKIEELGGKAKEAVGEATENEQLADEGRADQTKADVK).

It belongs to the UPF0337 (CsbD) family.

This Corynebacterium diphtheriae (strain ATCC 700971 / NCTC 13129 / Biotype gravis) protein is UPF0337 protein DIP1660.